The primary structure comprises 363 residues: Protein arginine N-methyltransferase 2 (363 aa).

ANK repeat units follow at residues 22–46 and 48–80; these read AAQTAAPSVLADLLAEGAPAWFQDD and LGWSCLHYAAERKEPECLEVLLQGGAVWNAVDK. Positions 111 to 363 constitute an RMT2 domain; the sequence is KTSAGDNLVF…RLPIAKMSLI (253 aa). Residues phenylalanine 120, 186 to 191, 209 to 211, 236 to 237, and aspartate 265 contribute to the S-adenosyl-L-methionine site; these read FGLGIV, EAH, and WQ.

This sequence belongs to the class I-like SAM-binding methyltransferase superfamily. RMT2 methyltransferase family. In terms of assembly, monomer.

It localises to the cytoplasm. The protein resides in the nucleus. In terms of biological role, S-adenosyl-L-methionine-dependent protein-arginine N-methyltransferase that methylates the delta-nitrogen atom of arginine residues to form N5-methylarginine (type IV) in target proteins. Monomethylates ribosomal protein L12. The protein is Protein arginine N-methyltransferase 2 of Cryptococcus neoformans var. neoformans serotype D (strain B-3501A) (Filobasidiella neoformans).